Consider the following 1927-residue polypeptide: Integrin beta-like protein A (1927 aa).

The first 20 residues, 1-20 (MNRILTLFILFISLFIVCEA), serve as a signal peptide directing secretion. The Extracellular segment spans residues 21 to 1860 (THFRFGTMSW…KENNNKTVLT (1840 aa)). N-linked (GlcNAc...) asparagine glycosylation occurs at Asn309. The 38-residue stretch at 425 to 462 (YGEKCDPVDPCVNGESNEGSQGNGKCTCYYGWEGKNCD) folds into the EGF-like domain. Disulfide bonds link Cys435-Cys450 and Cys452-Cys461. The region spanning 522-709 (EVLVLVDSQP…VLSKAVVKAI (188 aa)) is the VWFA domain. Residues Asn1122, Asn1516, Asn1717, Asn1723, and Asn1855 are each glycosylated (N-linked (GlcNAc...) asparagine). Residues 1861-1881 (GAIAGAAAGAGLLAAGAWFLL) traverse the membrane as a helical segment. Over 1882–1927 (KKSAPPTDAFFGEGAFADGAVSTNPMYEESGRSAINPLYEASSENL) the chain is Cytoplasmic.

It belongs to the SIB family. Interacts with talA/talin.

Its subcellular location is the membrane. Functionally, implicated in cellular adhesion to substrate or phagocytic particles. The chain is Integrin beta-like protein A (sibA) from Dictyostelium discoideum (Social amoeba).